We begin with the raw amino-acid sequence, 621 residues long: Elongation factor 4 (621 aa).

Residues 21 to 203 (DLIRNICIIA…AIVKRVPPPK (183 aa)) enclose the tr-type G domain. GTP is bound by residues 33-38 (DHGKTT) and 150-153 (NKID).

It belongs to the TRAFAC class translation factor GTPase superfamily. Classic translation factor GTPase family. LepA subfamily.

Its subcellular location is the cell inner membrane. The catalysed reaction is GTP + H2O = GDP + phosphate + H(+). Functionally, required for accurate and efficient protein synthesis under certain stress conditions. May act as a fidelity factor of the translation reaction, by catalyzing a one-codon backward translocation of tRNAs on improperly translocated ribosomes. Back-translocation proceeds from a post-translocation (POST) complex to a pre-translocation (PRE) complex, thus giving elongation factor G a second chance to translocate the tRNAs correctly. Binds to ribosomes in a GTP-dependent manner. The protein is Elongation factor 4 of Thermotoga maritima (strain ATCC 43589 / DSM 3109 / JCM 10099 / NBRC 100826 / MSB8).